Here is a 793-residue protein sequence, read N- to C-terminus: Putative glutamate--cysteine ligase 2-3 (793 aa).

The carboxylate-amine ligase stretch occupies residues 1–407; the sequence is MLASDPRKVG…RFWDRGDTAD (407 aa). Residues 367–390 form a disordered region; it reads TEHLPDVEVPPPREPGPKSTGAGR. Positions 408–793 are peptidase M20; that stretch reads MTWTESTELD…ALTRLEDQSG (386 aa).

The protein in the C-terminal section; belongs to the glutamate--cysteine ligase type 2 family. YbdK subfamily.

It catalyses the reaction L-cysteine + L-glutamate + ATP = gamma-L-glutamyl-L-cysteine + ADP + phosphate + H(+). Functionally, ATP-dependent carboxylate-amine ligase which exhibits weak glutamate--cysteine ligase activity. The sequence is that of Putative glutamate--cysteine ligase 2-3 from Rhodococcus jostii (strain RHA1).